Here is a 148-residue protein sequence, read N- to C-terminus: Deoxyuridine 5'-triphosphate nucleotidohydrolase (148 aa).

Residues 67–69, asparagine 80, 84–86, and methionine 94 contribute to the substrate site; these read RSG and LID.

This sequence belongs to the dUTPase family. The cofactor is Mg(2+).

The enzyme catalyses dUTP + H2O = dUMP + diphosphate + H(+). Its pathway is pyrimidine metabolism; dUMP biosynthesis; dUMP from dCTP (dUTP route): step 2/2. Its function is as follows. This enzyme is involved in nucleotide metabolism: it produces dUMP, the immediate precursor of thymidine nucleotides and it decreases the intracellular concentration of dUTP so that uracil cannot be incorporated into DNA. The polypeptide is Deoxyuridine 5'-triphosphate nucleotidohydrolase (Burkholderia ambifaria (strain ATCC BAA-244 / DSM 16087 / CCUG 44356 / LMG 19182 / AMMD) (Burkholderia cepacia (strain AMMD))).